We begin with the raw amino-acid sequence, 155 residues long: Endoribonuclease YbeY (155 aa).

Positions 114, 118, and 124 each coordinate Zn(2+).

The protein belongs to the endoribonuclease YbeY family. Zn(2+) serves as cofactor.

The protein resides in the cytoplasm. Single strand-specific metallo-endoribonuclease involved in late-stage 70S ribosome quality control and in maturation of the 3' terminus of the 16S rRNA. This chain is Endoribonuclease YbeY, found in Shigella dysenteriae serotype 1 (strain Sd197).